Reading from the N-terminus, the 168-residue chain is Vasopressin-neurophysin 2-copeptin (168 aa).

The N-terminal stretch at Met-1 to Ala-23 is a signal peptide. An intrachain disulfide couples Cys-24 to Cys-29. Gly-32 carries the post-translational modification Glycine amide. Intrachain disulfides connect Cys-45–Cys-89, Cys-48–Cys-62, Cys-56–Cys-79, Cys-63–Cys-69, Cys-96–Cys-108, Cys-102–Cys-120, and Cys-109–Cys-114. N-linked (GlcNAc...) asparagine glycosylation is present at Asn-135.

This sequence belongs to the vasopressin/oxytocin family. Interacts with vasopressin receptors V1bR/AVPR1B (Ki=85 pM), V1aR/AVPR1A (Ki=0.6 nM) and V2R/AVPR2 (Ki=4.9 nM). Interacts with oxytocin receptor (OXTR) (Ki=110 nM).

It localises to the secreted. Neurophysin 2 specifically binds vasopressin. Its function is as follows. Vasopressin has a direct antidiuretic action on the kidney, it also causes vasoconstriction of the peripheral vessels. Acts by binding to vasopressin receptors (V1bR/AVPR1B, V1aR/AVPR1A, and V2R/AVPR2). In Mus musculus (Mouse), this protein is Vasopressin-neurophysin 2-copeptin (Avp).